The sequence spans 281 residues: ATP phosphoribosyltransferase (281 aa).

The protein belongs to the ATP phosphoribosyltransferase family. Long subfamily. Requires Mg(2+) as cofactor.

The protein localises to the cytoplasm. The enzyme catalyses 1-(5-phospho-beta-D-ribosyl)-ATP + diphosphate = 5-phospho-alpha-D-ribose 1-diphosphate + ATP. It participates in amino-acid biosynthesis; L-histidine biosynthesis; L-histidine from 5-phospho-alpha-D-ribose 1-diphosphate: step 1/9. Feedback inhibited by histidine. Its function is as follows. Catalyzes the condensation of ATP and 5-phosphoribose 1-diphosphate to form N'-(5'-phosphoribosyl)-ATP (PR-ATP). Has a crucial role in the pathway because the rate of histidine biosynthesis seems to be controlled primarily by regulation of HisG enzymatic activity. The polypeptide is ATP phosphoribosyltransferase (Corynebacterium glutamicum (strain R)).